Consider the following 439-residue polypeptide: (p)ppApp synthetase toxin Tas1 (439 aa).

Its subcellular location is the secreted. The catalysed reaction is AMP + ATP = adenosine 3'-diphosphate,5'-phosphate + AMP + H(+). The enzyme catalyses ADP + ATP = adenosine 3'-diphosphate,5'-diphosphate + AMP. It catalyses the reaction 2 ATP = adenosine 3'-diphosphate,5'-triphosphate + AMP. Functionally, type VI secretion exported toxin that pyrophosphorylates adenosine nucleotides to produce (p)ppApp. Thereby, depletes cellular ADP and ATP to dysregulate central metabolism in competitor cells. The chain is (p)ppApp synthetase toxin Tas1 (tas1) from Pseudomonas aeruginosa (strain UCBPP-PA14).